Consider the following 230-residue polypeptide: MRKPSITITTAKAIITPDYTLIKSHSKYQLPSRFQKLDADSPERSTVVKLFYRRFMRLKPFISNVKMVKDTYRDYVRYKFMKENYELKRYLVFNPDGLRSKIKVELLSNTKCCEKILPVTEMQRTLEFVLKSCSYLPETKAQKWDIARDNTYCRQILKNLLTMQYEKYRSILHRGIGHDELDVKFSHLKTTSSPLTKLNKTEKKKIPLFKVFSDFDTTLIYLNETLGTRL.

It belongs to the IRC19 family.

Functionally, involved in sporulation and maintenance of the mitochondrial DNA. Is probably involved in a pathway contributing to genomic integrity. The sequence is that of Increased recombination centers protein 19 (IRC19) from Saccharomyces cerevisiae (strain AWRI1631) (Baker's yeast).